The chain runs to 759 residues: Arylphorin subunit A4 (759 aa).

Positions 1–16 (MKIAIVLLAIIALVAA) are cleaved as a signal peptide.

The protein belongs to the hemocyanin family. As to quaternary structure, heterohexamer. Fat body.

It localises to the secreted. Its subcellular location is the extracellular space. Functionally, arylphorin is a larval storage protein (LSP) which may serve as a storage protein used primarily as a source of aromatic amino acids for protein synthesis during metamorphosis. It is a constituent of the sclerotizing system of the cuticle, and serves as a carrier for ecdysteroid hormone. This chain is Arylphorin subunit A4, found in Calliphora vicina (Blue blowfly).